A 755-amino-acid chain; its full sequence is Sentrin-specific protease 5 (755 aa).

Residues 268 to 321 (VQKVTGDHQETRRENGEGGSCSPFPSPEPKDPSCRHQPYFPDMDSSAVVKGTNS) form a disordered region. Residues 272 to 283 (TGDHQETRRENG) show a composition bias toward basic and acidic residues. The segment at 567–724 (HMLDMDDLAT…VFVLQYCKCL (158 aa)) is protease. Residues His646, Asp663, and Cys713 contribute to the active site.

The protein belongs to the peptidase C48 family. As to quaternary structure, interacts with CCAR2.

The protein resides in the nucleus. The protein localises to the nucleolus. Protease that catalyzes two essential functions in the SUMO pathway: processing of full-length SUMO3 to its mature form and deconjugation of SUMO2 and SUMO3 from targeted proteins. Has weak proteolytic activity against full-length SUMO1 or SUMO1 conjugates. Required for cell division. This chain is Sentrin-specific protease 5 (SENP5), found in Homo sapiens (Human).